A 358-amino-acid chain; its full sequence is Acyl-CoA desaturase 1 (358 aa).

Residues 1-71 (MPAHMLQEIS…EGPPPKLEYV (71 aa)) lie on the Cytoplasmic side of the membrane. Residues 8–24 (EISSSYTTTTTITEPPS) show a composition bias toward low complexity. The interval 8 to 33 (EISSSYTTTTTITEPPSGNLQNGREK) is disordered. Residues 72–92 (WRNIILMALLHVGALYGITLI) form a helical membrane-spanning segment. N74 is a binding site for substrate. At 93 to 96 (PSSK) the chain is on the lumenal side. A helical transmembrane segment spans residues 97-117 (VYTLLWGIFYYLISALGITAG). Over 118–216 (AHRLWSHRTY…EKLVMFQRRY (99 aa)) the chain is Cytoplasmic. Fe cation is bound by residues H119 and H124. A Histidine box-1 motif is present at residues 119–124 (HRLWSH). Substrate contacts are provided by N147, R154, and D155. Fe cation-binding residues include H156, H159, and H160. The Histidine box-2 signature appears at 156 to 160 (HRAHH). The substrate site is built by R187 and K188. The chain crosses the membrane as a helical span at residues 217-236 (YKPGLLLMCFILPTLVPWYC). At 237–240 (WGET) the chain is on the lumenal side. A helical membrane pass occupies residues 241–262 (FLHSLFVSTFLRYTLVLNATWL). Residue W261 coordinates substrate. At 263-358 (VNSAAHLYGY…RTGDGSHKSS (96 aa)) the chain is on the cytoplasmic side. 4 residues coordinate Fe cation: H268, H297, H300, and H301. The Histidine box-3 motif lies at 297–301 (HNYHH).

Belongs to the fatty acid desaturase type 1 family. Fe(2+) serves as cofactor. In terms of tissue distribution, detected in liver (at protein level). Detected in adipose tissue. Detected in liver when rats are kept on a fat-free diet, but not when their food contains unsaturated fatty acids.

It is found in the endoplasmic reticulum membrane. It localises to the membrane. The enzyme catalyses octadecanoyl-CoA + 2 Fe(II)-[cytochrome b5] + O2 + 2 H(+) = (9Z)-octadecenoyl-CoA + 2 Fe(III)-[cytochrome b5] + 2 H2O. Functionally, stearoyl-CoA desaturase that utilizes O(2) and electrons from reduced cytochrome b5 to introduce the first double bond into saturated fatty acyl-CoA substrates. Catalyzes the insertion of a cis double bond at the Delta-9 position into fatty acyl-CoA substrates including palmitoyl-CoA and stearoyl-CoA. Gives rise to a mixture of 16:1 and 18:1 unsaturated fatty acids. Plays an important role in lipid biosynthesis. Plays an important role in regulating the expression of genes that are involved in lipogenesis and in regulating mitochondrial fatty acid oxidation. Plays an important role in body energy homeostasis. Contributes to the biosynthesis of membrane phospholipids, cholesterol esters and triglycerides. Required for normal development of sebaceous glands. Required for the biosynthesis of normal levels of Delta-9 unsaturated fatty acids and 1-alkyl-2,3-diacylglycerol in the Harderian gland. Required for normal production of meibum, an oily material that prevents drying of the cornea. This chain is Acyl-CoA desaturase 1 (Scd1), found in Rattus norvegicus (Rat).